The sequence spans 89 residues: Small ribosomal subunit protein uS14A (89 aa).

This sequence belongs to the universal ribosomal protein uS14 family. In terms of assembly, part of the 30S ribosomal subunit. Contacts proteins S3 and S10.

Its function is as follows. Binds 16S rRNA, required for the assembly of 30S particles and may also be responsible for determining the conformation of the 16S rRNA at the A site. The polypeptide is Small ribosomal subunit protein uS14A (Limosilactobacillus reuteri (strain DSM 20016) (Lactobacillus reuteri)).